The chain runs to 517 residues: Transcription factor MTB3 (517 aa).

The tract at residues 290–331 (GNSSNGYRSDEGEGKLYKEELDERKPRKRGRKPANGREEALN) is disordered. The segment covering 297–314 (RSDEGEGKLYKEELDERK) has biased composition (basic and acidic residues). Residues 327–340 (EEALNHVEAERQRR) form a basic motif; degenerate region. In terms of domain architecture, bHLH spans 327-376 (EEALNHVEAERQRREKLNQRFYALRAVVPNISKMDKASLLGDAIAYITDL). The segment at 341 to 376 (EKLNQRFYALRAVVPNISKMDKASLLGDAIAYITDL) is helix-loop-helix motif.

The protein resides in the nucleus. Its function is as follows. Transcription factor that negatively regulates jasmonate (JA) signaling. Negatively regulates JA-dependent response to wounding, JA-induced expression of defense genes, JA-dependent responses against herbivorous insects, and JA-dependent resistance against Botrytis cinerea infection. Plays a positive role in resistance against the bacterial pathogen Pseudomonas syringae pv tomato DC3000. This is Transcription factor MTB3 from Solanum lycopersicum (Tomato).